The primary structure comprises 367 residues: Protein-glutamate methylesterase/protein-glutamine glutaminase 2 (367 aa).

Positions S3–D120 constitute a Response regulatory domain. D54 carries the post-translational modification 4-aspartylphosphate. Positions R132–A174 are disordered. Residues A143–A174 are compositionally biased toward low complexity. One can recognise a CheB-type methylesterase domain in the interval S175–K367. Active-site residues include S187, H214, and D310.

The protein belongs to the CheB family. In terms of processing, phosphorylated by CheA. Phosphorylation of the N-terminal regulatory domain activates the methylesterase activity.

It localises to the cytoplasm. The enzyme catalyses [protein]-L-glutamate 5-O-methyl ester + H2O = L-glutamyl-[protein] + methanol + H(+). It catalyses the reaction L-glutaminyl-[protein] + H2O = L-glutamyl-[protein] + NH4(+). Its function is as follows. Involved in chemotaxis. Part of a chemotaxis signal transduction system that modulates chemotaxis in response to various stimuli. Catalyzes the demethylation of specific methylglutamate residues introduced into the chemoreceptors (methyl-accepting chemotaxis proteins or MCP) by CheR. Also mediates the irreversible deamidation of specific glutamine residues to glutamic acid. This Nitratidesulfovibrio vulgaris (strain ATCC 29579 / DSM 644 / CCUG 34227 / NCIMB 8303 / VKM B-1760 / Hildenborough) (Desulfovibrio vulgaris) protein is Protein-glutamate methylesterase/protein-glutamine glutaminase 2.